Reading from the N-terminus, the 242-residue chain is Aquaporin (242 aa).

The Cytoplasmic segment spans residues 1–11 (MNTSTKLICQK). The chain crosses the membrane as a helical span at residues 12-32 (LFAEMLCSCIFGFAVYSAILN). At 33 to 39 (TKASNSS) the chain is on the extracellular side. The helical transmembrane segment at 40 to 60 (ISSTTVGLTVCFSSISLIYTF) threads the bilayer. Residues 61-83 (CDHSVAHFNPAITIAAICTGKLD) lie on the Cytoplasmic side of the membrane. The short motif at 69–71 (NPA) is the NPA element. The helical transmembrane segment at 84–104 (ILLGIGYVIAQLIGFILATLL) threads the bilayer. Topologically, residues 105 to 133 (TVVCFPYGYLKTMEFIASARISDDISTVN) are extracellular. The helical transmembrane segment at 134–154 (LFFTEFILSFILVFIAFEVGI) threads the bilayer. Over 155–175 (NAIREPGVTLFVGIKQIDRSK) the chain is Cytoplasmic. A helical membrane pass occupies residues 176-196 (FAPLTIGITLGFLAFLASTTS). At 197–217 (GGAFNPGIVWGPAIMGGNFDD) the chain is on the extracellular side. The short motif at 201–203 (NPG) is the NPG element. The helical transmembrane segment at 218-238 (FVIYIISELSGGLLGAFIQVF) threads the bilayer. Over 239–242 (LLFK) the chain is Cytoplasmic.

The protein belongs to the MIP/aquaporin (TC 1.A.8) family.

The protein resides in the cell membrane. Water channel required to facilitate the transport of water across membranes. Involved in osmotolerance. The protein is Aquaporin (AQP) of Enterocytozoon bieneusi (strain H348) (Microsporidian parasite).